Consider the following 309-residue polypeptide: Glutaminase (309 aa).

Substrate-binding residues include S64, N114, E160, N167, Y191, Y243, and V261.

Belongs to the glutaminase family. As to quaternary structure, homotetramer.

It carries out the reaction L-glutamine + H2O = L-glutamate + NH4(+). In Rhodopseudomonas palustris (strain BisB18), this protein is Glutaminase.